Reading from the N-terminus, the 460-residue chain is MTATEQQQDDFSNVSWSEHVHDQQTRSVPDAEEPGHDMNAPGTGLERDAPSLGNEKLECTVDTPIKENDGTKDAFVSYLITTHSTFSSFQRSTTTVRRRFTDFVFLYKQLTRDYPAAAVPPLPDKQRMEYVRGDRFGSDFTTRRANSLQRFLSRLSLHPTLRRAPILHTFLESPDWNATMRSRGSRVSSASDPGSAGVFDNFADTFINAFTKLHRPDRRFLEVKEKSDKLDDDLGHIEKVIARVARREADLEVDLRDLAEQFQKLIPLEPHVEPAVHGFSASIEDTASHLRKLKDMTDQDYLGSLRDMQAYSIALKNLLKAREQKQLDYEQLTEYLNKSTTERDTLQSGHGGGSGAGSFLRAKIEDVRGVDHEQARRERTRKLELRVEELTHEVESARKTSDMFDDEVVKEVADFERIKRIEMKAQLGSLADSHIEFYGEVASIWEKYVEEMEKQGITSA.

Positions Met-1–Trp-16 are enriched in polar residues. The disordered stretch occupies residues Met-1–Gly-53. Residues Lys-56–Ala-178 enclose the PX domain. Coiled coils occupy residues Glu-238–Ile-266, Arg-306–Asn-337, and Gln-374–Met-403.

It belongs to the sorting nexin family. In terms of assembly, forms a complex with ATG20 and ATG17.

The protein resides in the cytoplasm. It localises to the membrane. The protein localises to the endosome membrane. Functionally, sorting nexin involved in the separation or division of vacuoles throughout the entire life cycle of the cells. Involved in retrieval of late-Golgi SNAREs from post-Golgi endosomes to the trans-Golgi network, for cytoplasm to vacuole transport (Cvt), and autophagy of large cargos including mitophagy, pexophagy and glycophagy. Autophagy is required for proper vegetative growth, asexual/sexual reproduction, and full virulence. Autophagy is particularly involved in the biosynthesis of deoxynivalenol (DON), an important virulence determinant. This Gibberella zeae (strain ATCC MYA-4620 / CBS 123657 / FGSC 9075 / NRRL 31084 / PH-1) (Wheat head blight fungus) protein is Sorting nexin-4.